The following is a 371-amino-acid chain: Queuine tRNA-ribosyltransferase (371 aa).

Aspartate 90 (proton acceptor) is an active-site residue. Residues 90–94 (DSGGF), aspartate 144, glutamine 189, and glycine 215 contribute to the substrate site. The RNA binding stretch occupies residues 246 to 252 (GVGTPEN). The active-site Nucleophile is the aspartate 265. An RNA binding; important for wobble base 34 recognition region spans residues 270 to 274 (TRNAR). Residues cysteine 303, cysteine 305, cysteine 308, and histidine 334 each coordinate Zn(2+).

It belongs to the queuine tRNA-ribosyltransferase family. As to quaternary structure, homodimer. Within each dimer, one monomer is responsible for RNA recognition and catalysis, while the other monomer binds to the replacement base PreQ1. Zn(2+) is required as a cofactor.

It catalyses the reaction 7-aminomethyl-7-carbaguanine + guanosine(34) in tRNA = 7-aminomethyl-7-carbaguanosine(34) in tRNA + guanine. The protein operates within tRNA modification; tRNA-queuosine biosynthesis. In terms of biological role, catalyzes the base-exchange of a guanine (G) residue with the queuine precursor 7-aminomethyl-7-deazaguanine (PreQ1) at position 34 (anticodon wobble position) in tRNAs with GU(N) anticodons (tRNA-Asp, -Asn, -His and -Tyr). Catalysis occurs through a double-displacement mechanism. The nucleophile active site attacks the C1' of nucleotide 34 to detach the guanine base from the RNA, forming a covalent enzyme-RNA intermediate. The proton acceptor active site deprotonates the incoming PreQ1, allowing a nucleophilic attack on the C1' of the ribose to form the product. After dissociation, two additional enzymatic reactions on the tRNA convert PreQ1 to queuine (Q), resulting in the hypermodified nucleoside queuosine (7-(((4,5-cis-dihydroxy-2-cyclopenten-1-yl)amino)methyl)-7-deazaguanosine). This chain is Queuine tRNA-ribosyltransferase, found in Helicobacter pylori (strain HPAG1).